The sequence spans 88 residues: Alpha-latrotoxin associated low molecular weight protein (88 aa).

An N-terminal signal peptide occupies residues 1–18 (MSKLFFVAFLCLIISVFA).

The protein belongs to the arthropod CHH/MIH/GIH/VIH hormone family. In terms of tissue distribution, expressed by the venom gland.

It is found in the secreted. Its function is as follows. May increase the toxicity of alpha-latrotoxin and/or other venom components. Is non-toxic to mice and to the cockroach Periplaneta americana. The sequence is that of Alpha-latrotoxin associated low molecular weight protein from Latrodectus hesperus (Western black widow spider).